A 176-amino-acid chain; its full sequence is Peptide methionine sulfoxide reductase B3 (176 aa).

The signal sequence occupies residues 1 to 26 (MNIVNSKILFLSFTLLLLLQSSIVES). The MsrB domain occupies 51-172 (DEEWRAILSP…NSVSLKFTPA (122 aa)). Residues Cys-90, Cys-93, Cys-136, and Cys-139 each coordinate Zn(2+). Residues Cys-108 and Cys-161 are joined by a disulfide bond. Cys-161 serves as the catalytic Nucleophile.

It belongs to the MsrB Met sulfoxide reductase family. It depends on Zn(2+) as a cofactor.

It localises to the endoplasmic reticulum. The catalysed reaction is L-methionyl-[protein] + [thioredoxin]-disulfide + H2O = L-methionyl-(R)-S-oxide-[protein] + [thioredoxin]-dithiol. Its function is as follows. Catalyzes the reduction of methionine sulfoxide (MetSO) to methionine in proteins. Plays a protective role against oxidative stress by restoring activity to proteins that have been inactivated by methionine oxidation. Involved in cold tolerance. Eliminates MetSO and reactive oxygen species that accumulate at the ER during cold acclimation. MSRB family specifically reduces the MetSO R-enantiomer. The chain is Peptide methionine sulfoxide reductase B3 (MSRB3) from Arabidopsis thaliana (Mouse-ear cress).